We begin with the raw amino-acid sequence, 296 residues long: Glycine--tRNA ligase alpha subunit (296 aa).

Belongs to the class-II aminoacyl-tRNA synthetase family. As to quaternary structure, tetramer of two alpha and two beta subunits.

The protein resides in the cytoplasm. The enzyme catalyses tRNA(Gly) + glycine + ATP = glycyl-tRNA(Gly) + AMP + diphosphate. This chain is Glycine--tRNA ligase alpha subunit, found in Synechococcus sp. (strain CC9605).